The sequence spans 295 residues: Porphobilinogen deaminase (295 aa).

Cysteine 241 is subject to S-(dipyrrolylmethanemethyl)cysteine.

Belongs to the HMBS family. As to quaternary structure, monomer. Requires dipyrromethane as cofactor.

The enzyme catalyses 4 porphobilinogen + H2O = hydroxymethylbilane + 4 NH4(+). Its pathway is porphyrin-containing compound metabolism; protoporphyrin-IX biosynthesis; coproporphyrinogen-III from 5-aminolevulinate: step 2/4. In terms of biological role, tetrapolymerization of the monopyrrole PBG into the hydroxymethylbilane pre-uroporphyrinogen in several discrete steps. This Lachnospira eligens (strain ATCC 27750 / DSM 3376 / VPI C15-48 / C15-B4) (Eubacterium eligens) protein is Porphobilinogen deaminase.